A 381-amino-acid chain; its full sequence is Succinyl-diaminopimelate desuccinylase (381 aa).

His-72 contacts Zn(2+). Asp-74 is an active-site residue. Residue Asp-105 participates in Zn(2+) binding. Residue Glu-139 is the Proton acceptor of the active site. Residues Glu-140, Glu-168, and His-354 each coordinate Zn(2+).

This sequence belongs to the peptidase M20A family. DapE subfamily. Homodimer. Zn(2+) serves as cofactor. Requires Co(2+) as cofactor.

The catalysed reaction is N-succinyl-(2S,6S)-2,6-diaminopimelate + H2O = (2S,6S)-2,6-diaminopimelate + succinate. It participates in amino-acid biosynthesis; L-lysine biosynthesis via DAP pathway; LL-2,6-diaminopimelate from (S)-tetrahydrodipicolinate (succinylase route): step 3/3. Its function is as follows. Catalyzes the hydrolysis of N-succinyl-L,L-diaminopimelic acid (SDAP), forming succinate and LL-2,6-diaminopimelate (DAP), an intermediate involved in the bacterial biosynthesis of lysine and meso-diaminopimelic acid, an essential component of bacterial cell walls. The sequence is that of Succinyl-diaminopimelate desuccinylase from Shewanella sp. (strain MR-4).